A 171-amino-acid polypeptide reads, in one-letter code: Cytochrome c oxidase subunit 5b-2, mitochondrial (171 aa).

Residues 1–54 constitute a mitochondrion transit peptide; sequence MWRRIVSSHLKSISAVGSCAAPSCRHAVVESTHLSLSTRASSIPAYSSIFSRLI. The Zn(2+) site is built by Cys-121, Cys-145, and Cys-148.

The protein belongs to the cytochrome c oxidase subunit 5B (TC 3.D.4.11) family.

It localises to the mitochondrion inner membrane. In terms of biological role, this protein is one of the nuclear-coded polypeptide chains of cytochrome c oxidase, the terminal oxidase in mitochondrial electron transport. This chain is Cytochrome c oxidase subunit 5b-2, mitochondrial (COX5B-2), found in Arabidopsis thaliana (Mouse-ear cress).